Here is a 388-residue protein sequence, read N- to C-terminus: Carbamoyl phosphate synthase small chain (388 aa).

The interval 1–194 is CPSase; it reads MAQNPLSKPT…WPEGYARQEA (194 aa). Serine 53, glycine 246, and glycine 248 together coordinate L-glutamine. In terms of domain architecture, Glutamine amidotransferase type-1 spans 198–387; it reads KVVAIDYGAK…AAAMDAQKAE (190 aa). The active-site Nucleophile is cysteine 276. L-glutamine is bound by residues leucine 277, glutamine 280, asparagine 318, glycine 320, and phenylalanine 321. Active-site residues include histidine 360 and glutamate 362.

Belongs to the CarA family. In terms of assembly, composed of two chains; the small (or glutamine) chain promotes the hydrolysis of glutamine to ammonia, which is used by the large (or ammonia) chain to synthesize carbamoyl phosphate. Tetramer of heterodimers (alpha,beta)4.

It carries out the reaction hydrogencarbonate + L-glutamine + 2 ATP + H2O = carbamoyl phosphate + L-glutamate + 2 ADP + phosphate + 2 H(+). It catalyses the reaction L-glutamine + H2O = L-glutamate + NH4(+). It participates in amino-acid biosynthesis; L-arginine biosynthesis; carbamoyl phosphate from bicarbonate: step 1/1. Its pathway is pyrimidine metabolism; UMP biosynthesis via de novo pathway; (S)-dihydroorotate from bicarbonate: step 1/3. Small subunit of the glutamine-dependent carbamoyl phosphate synthetase (CPSase). CPSase catalyzes the formation of carbamoyl phosphate from the ammonia moiety of glutamine, carbonate, and phosphate donated by ATP, constituting the first step of 2 biosynthetic pathways, one leading to arginine and/or urea and the other to pyrimidine nucleotides. The small subunit (glutamine amidotransferase) binds and cleaves glutamine to supply the large subunit with the substrate ammonia. This Ruegeria pomeroyi (strain ATCC 700808 / DSM 15171 / DSS-3) (Silicibacter pomeroyi) protein is Carbamoyl phosphate synthase small chain.